Consider the following 614-residue polypeptide: UPF0329 protein ECU03_0090 (614 aa).

2 stretches are compositionally biased toward basic and acidic residues: residues 317 to 338 and 345 to 354; these read EREEAEKMRGEEERRKKEEESL and LRMEEKEKSK. The disordered stretch occupies residues 317–420; it reads EREEAEKMRG…KKSRSKGHRY (104 aa). Residues 355–364 are compositionally biased toward basic residues; the sequence is SRGKKKKGGK. Basic and acidic residues predominate over residues 372 to 381; sequence AKMEEEKKDS. A compositionally biased stretch (acidic residues) spans 382-394; it reads EEVEESAEAEVSL. Basic residues predominate over residues 408 to 420; the sequence is SSKKKSRSKGHRY.

It belongs to the UPF0329 family.

The protein is UPF0329 protein ECU03_0090 of Encephalitozoon cuniculi (strain GB-M1) (Microsporidian parasite).